The following is a 441-amino-acid chain: tRNA-2-methylthio-N(6)-dimethylallyladenosine synthase (441 aa).

The MTTase N-terminal domain maps to K5–E121. The [4Fe-4S] cluster site is built by C14, C50, C84, C159, C163, and C166. The 231-residue stretch at A145–A375 folds into the Radical SAM core domain. The TRAM domain maps to R378–H440.

The protein belongs to the methylthiotransferase family. MiaB subfamily. In terms of assembly, monomer. [4Fe-4S] cluster serves as cofactor.

Its subcellular location is the cytoplasm. It catalyses the reaction N(6)-dimethylallyladenosine(37) in tRNA + (sulfur carrier)-SH + AH2 + 2 S-adenosyl-L-methionine = 2-methylsulfanyl-N(6)-dimethylallyladenosine(37) in tRNA + (sulfur carrier)-H + 5'-deoxyadenosine + L-methionine + A + S-adenosyl-L-homocysteine + 2 H(+). Its function is as follows. Catalyzes the methylthiolation of N6-(dimethylallyl)adenosine (i(6)A), leading to the formation of 2-methylthio-N6-(dimethylallyl)adenosine (ms(2)i(6)A) at position 37 in tRNAs that read codons beginning with uridine. In Citrifermentans bemidjiense (strain ATCC BAA-1014 / DSM 16622 / JCM 12645 / Bem) (Geobacter bemidjiensis), this protein is tRNA-2-methylthio-N(6)-dimethylallyladenosine synthase.